The following is a 447-amino-acid chain: Glycogen synthase (447 aa).

R15 contacts ADP-alpha-D-glucose.

This sequence belongs to the glycosyltransferase 1 family. Bacterial/plant glycogen synthase subfamily.

It catalyses the reaction [(1-&gt;4)-alpha-D-glucosyl](n) + ADP-alpha-D-glucose = [(1-&gt;4)-alpha-D-glucosyl](n+1) + ADP + H(+). Its pathway is glycan biosynthesis; glycogen biosynthesis. In terms of biological role, synthesizes alpha-1,4-glucan chains using ADP-glucose. The chain is Glycogen synthase from Deinococcus geothermalis (strain DSM 11300 / CIP 105573 / AG-3a).